The sequence spans 282 residues: Pantothenate synthetase (282 aa).

30-37 (MGGLHQGH) lines the ATP pocket. The active-site Proton donor is the H37. Residue Q61 participates in (R)-pantoate binding. Q61 serves as a coordination point for beta-alanine. Residue 146 to 149 (GQKD) coordinates ATP. Q152 contacts (R)-pantoate. ATP contacts are provided by residues I175 and 183–186 (MSTR).

This sequence belongs to the pantothenate synthetase family. As to quaternary structure, homodimer.

It is found in the cytoplasm. The enzyme catalyses (R)-pantoate + beta-alanine + ATP = (R)-pantothenate + AMP + diphosphate + H(+). It participates in cofactor biosynthesis; (R)-pantothenate biosynthesis; (R)-pantothenate from (R)-pantoate and beta-alanine: step 1/1. In terms of biological role, catalyzes the condensation of pantoate with beta-alanine in an ATP-dependent reaction via a pantoyl-adenylate intermediate. In Vesicomyosocius okutanii subsp. Calyptogena okutanii (strain HA), this protein is Pantothenate synthetase.